The primary structure comprises 623 residues: V-type proton ATPase catalytic subunit A (623 aa).

Residue 252-259 coordinates ATP; it reads GAFGCGKT.

The protein belongs to the ATPase alpha/beta chains family. As to quaternary structure, V-ATPase is a heteromultimeric enzyme composed of a peripheral catalytic V1 complex (main components: subunits A, B, C, D, E, and F) attached to an integral membrane V0 proton pore complex (main component: the proteolipid protein).

The catalysed reaction is ATP + H2O + 4 H(+)(in) = ADP + phosphate + 5 H(+)(out). Its function is as follows. Catalytic subunit of the peripheral V1 complex of vacuolar ATPase. V-ATPase vacuolar ATPase is responsible for acidifying a variety of intracellular compartments in eukaryotic cells. The sequence is that of V-type proton ATPase catalytic subunit A from Vigna radiata var. radiata (Mung bean).